Reading from the N-terminus, the 171-residue chain is Calcium-binding protein F-like (171 aa).

4 EF-hand domains span residues 6–41, 57–80, 89–124, and 130–159; these read KIFE…KMNG, IDMD…KAKK, AALA…RGYT, and DQYL…RRID. Residues Asp-19, Asn-21, Asp-23, Ser-25, and Asp-30 each coordinate Ca(2+). The Ca(2+) site is built by Asp-102, Asp-104, Asp-106, Lys-108, Glu-113, Asp-137, Asp-139, Asp-141, Cys-143, and Glu-148.

The polypeptide is Calcium-binding protein F-like (cbp12) (Dictyostelium discoideum (Social amoeba)).